The chain runs to 1085 residues: RecBCD enzyme subunit RecC (1085 aa).

It belongs to the RecC family. As to quaternary structure, heterotrimer of RecB, RecC and RecD. All subunits contribute to DNA-binding.

Its function is as follows. A helicase/nuclease that prepares dsDNA breaks (DSB) for recombinational DNA repair. Binds to DSBs and unwinds DNA via a highly rapid and processive ATP-dependent bidirectional helicase activity. Holoenzyme degrades any linearized DNA that is unable to undergo homologous recombination. In the holoenzyme this subunit recognizes the wild-type Chi sequence, and when added to isolated RecB increases its ATP-dependent helicase processivity. Unlike the case in E.coli, suppresses RecA-dependent homologous recombination, is instead required for single-strand annealing pathway repair of DSB. The protein is RecBCD enzyme subunit RecC of Mycolicibacterium smegmatis (strain ATCC 700084 / mc(2)155) (Mycobacterium smegmatis).